The primary structure comprises 129 residues: MLELALGVPSLLSASTLSRPALASSFSNASTLLSFVFFFFFFKDSSPKASAMSSVGSFSASASAETLLDFFFFFFNPANKSSPEPFSLPFTAASKSSGITFLVFFFFFSAGSNPNSAAKSEDISCVLII.

Transmembrane regions (helical) follow at residues 22–42 (LASSFSNASTLLSFVFFFFFF), 55–75 (VGSFSASASAETLLDFFFFFF), and 88–108 (LPFTAASKSSGITFLVFFFFF).

The protein localises to the membrane. This is an uncharacterized protein from Saccharomyces cerevisiae (strain ATCC 204508 / S288c) (Baker's yeast).